Here is a 276-residue protein sequence, read N- to C-terminus: Malonyl-[acyl-carrier protein] O-methyltransferase (276 aa).

The protein belongs to the methyltransferase superfamily.

The enzyme catalyses malonyl-[ACP] + S-adenosyl-L-methionine = malonyl-[ACP] methyl ester + S-adenosyl-L-homocysteine. It participates in cofactor biosynthesis; biotin biosynthesis. Converts the free carboxyl group of a malonyl-thioester to its methyl ester by transfer of a methyl group from S-adenosyl-L-methionine (SAM). It allows to synthesize pimeloyl-ACP via the fatty acid synthetic pathway. The polypeptide is Malonyl-[acyl-carrier protein] O-methyltransferase (Paenibacillus sp. (strain JDR-2)).